Reading from the N-terminus, the 946-residue chain is DDB1- and CUL4-associated factor 5 (946 aa).

6 WD repeats span residues 51 to 91 (GHFG…HSRV), 99 to 139 (EHHS…LDVF), 140 to 180 (AHED…HGEP), 185 to 225 (NYPS…SSLL), 277 to 317 (FNSC…EAGG), and 331 to 370 (GHRSIVNQVRFNPHTYMICSSGVEKIIKIWSPYKQPGCTG). Residues 449–478 (GVSERSGYTDSESSASLPRSPPPTVDESAD) form a disordered region. The span at 454 to 465 (SGYTDSESSASL) shows a compositional bias: polar residues. Thr500 carries the phosphothreonine modification. 3 disordered regions span residues 527–656 (LSNE…MESV), 675–860 (SNNK…ELET), and 894–946 (CETP…KLKT). Phosphoserine occurs at positions 531 and 533. Over residues 531–544 (SDSEENVCEAELDT) the composition is skewed to acidic residues. Residues 555–567 (PEDGSSSPSSSTS) show a composition bias toward low complexity. A compositionally biased stretch (basic residues) spans 579–592 (ATTRQRNAMRRRQK). Low complexity predominate over residues 625–638 (LSPSPDSSPERSAS). A phosphoserine mark is found at Ser626, Ser628, and Ser645. Over residues 691-701 (EGRAGTSHKDN) the composition is skewed to basic and acidic residues. 2 stretches are compositionally biased toward polar residues: residues 760-769 (GTSQDTNNSG) and 808-819 (TLNSASGNCPRT).

As to quaternary structure, interacts with DDB1, CUL4A or CUL4B. Interacts with L3MBTL3. Interacts with SOX2. Interacts with DNMT1. Interacts with E2F1.

It participates in protein modification; protein ubiquitination. Is a substrate receptor for the CUL4-DDB1 E3 ubiquitin-protein ligase complex (CRL4), involved in the ubiquitination of a set of methylated non-histone proteins, including SOX2. The complex CRL4-DCAF5 is also involved in the ubiquitination of methylated DNMT1 and E2F1. In Mus musculus (Mouse), this protein is DDB1- and CUL4-associated factor 5 (Dcaf5).